Here is a 284-residue protein sequence, read N- to C-terminus: Polyamine aminopropyltransferase (284 aa).

Positions 2–237 (ELWYTEKHTE…GHWLFGFASK (236 aa)) constitute a PABS domain. Gln31 is an S-methyl-5'-thioadenosine binding site. Residues His62 and Asp86 each coordinate spermidine. S-methyl-5'-thioadenosine contacts are provided by residues Glu106 and 137–138 (DG). Catalysis depends on Asp155, which acts as the Proton acceptor. Residue 155 to 158 (DSTD) coordinates spermidine. Pro162 serves as a coordination point for S-methyl-5'-thioadenosine.

It belongs to the spermidine/spermine synthase family. In terms of assembly, homodimer or homotetramer.

The protein localises to the cytoplasm. The enzyme catalyses S-adenosyl 3-(methylsulfanyl)propylamine + putrescine = S-methyl-5'-thioadenosine + spermidine + H(+). It participates in amine and polyamine biosynthesis; spermidine biosynthesis; spermidine from putrescine: step 1/1. Its function is as follows. Catalyzes the irreversible transfer of a propylamine group from the amino donor S-adenosylmethioninamine (decarboxy-AdoMet) to putrescine (1,4-diaminobutane) to yield spermidine. The sequence is that of Polyamine aminopropyltransferase from Clostridium botulinum (strain Eklund 17B / Type B).